The sequence spans 164 residues: Phosphohistidine phosphatase SixA homolog (164 aa).

The protein belongs to the SixA phosphatase family.

This Haemophilus influenzae (strain ATCC 51907 / DSM 11121 / KW20 / Rd) protein is Phosphohistidine phosphatase SixA homolog (sixA-A).